The following is a 121-amino-acid chain: Type II secretion system protein I (121 aa).

A propeptide spans 1–6 (MKKQSG) (leader sequence). N-methylmethionine is present on Met7. Residues 7-27 (MTLIEVMVALVVFALAGLAVM) form a helical membrane-spanning segment.

It belongs to the GSP I family. In terms of assembly, type II secretion is composed of four main components: the outer membrane complex, the inner membrane complex, the cytoplasmic secretion ATPase and the periplasm-spanning pseudopilus. Interacts with core component PulG. Post-translationally, cleaved by prepilin peptidase. In terms of processing, methylated by prepilin peptidase at the amino group of the N-terminal methionine once the leader sequence is cleaved by prepilin peptidase.

The protein resides in the cell inner membrane. Component of the type II secretion system required for the energy-dependent secretion of extracellular factors such as proteases and toxins from the periplasm. Part of the pseudopilus tip complex that is critical for the recognition and binding of secretion substrates. This is Type II secretion system protein I (pulI) from Klebsiella pneumoniae.